A 217-amino-acid polypeptide reads, in one-letter code: Probable transaldolase (217 aa).

Residue Lys84 is the Schiff-base intermediate with substrate of the active site.

Belongs to the transaldolase family. Type 3B subfamily.

It is found in the cytoplasm. The enzyme catalyses D-sedoheptulose 7-phosphate + D-glyceraldehyde 3-phosphate = D-erythrose 4-phosphate + beta-D-fructose 6-phosphate. The protein operates within carbohydrate degradation; pentose phosphate pathway; D-glyceraldehyde 3-phosphate and beta-D-fructose 6-phosphate from D-ribose 5-phosphate and D-xylulose 5-phosphate (non-oxidative stage): step 2/3. In terms of biological role, transaldolase is important for the balance of metabolites in the pentose-phosphate pathway. The polypeptide is Probable transaldolase (Roseiflexus sp. (strain RS-1)).